Reading from the N-terminus, the 341-residue chain is Methionine import ATP-binding protein MetN 1 (341 aa).

An ABC transporter domain is found at 2 to 241; it reads IEFRQVSKTF…PKTTIAQNFV (240 aa). ATP is bound at residue 38-45; that stretch reads GYSGAGKS.

Belongs to the ABC transporter superfamily. Methionine importer (TC 3.A.1.24) family. In terms of assembly, the complex is composed of two ATP-binding proteins (MetN), two transmembrane proteins (MetI) and a solute-binding protein (MetQ).

Its subcellular location is the cell membrane. The catalysed reaction is L-methionine(out) + ATP + H2O = L-methionine(in) + ADP + phosphate + H(+). The enzyme catalyses D-methionine(out) + ATP + H2O = D-methionine(in) + ADP + phosphate + H(+). Part of the ABC transporter complex MetNIQ involved in methionine import. Responsible for energy coupling to the transport system. The chain is Methionine import ATP-binding protein MetN 1 from Staphylococcus aureus (strain MW2).